The sequence spans 271 residues: uncharacterized protein (271 aa).

The region spanning 24–124 (PIILLVHGGG…QVHVMIPHEP (101 aa)) is the AB hydrolase-1 domain.

Belongs to the AB hydrolase superfamily.

This is an uncharacterized protein from Bacillus subtilis (strain 168).